The chain runs to 201 residues: Segregation and condensation protein B (201 aa).

The protein belongs to the ScpB family. As to quaternary structure, homodimer. Homodimerization may be required to stabilize the binding of ScpA to the Smc head domains. Component of a cohesin-like complex composed of ScpA, ScpB and the Smc homodimer, in which ScpA and ScpB bind to the head domain of Smc. The presence of the three proteins is required for the association of the complex with DNA.

The protein localises to the cytoplasm. Its function is as follows. Participates in chromosomal partition during cell division. May act via the formation of a condensin-like complex containing Smc and ScpA that pull DNA away from mid-cell into both cell halves. This is Segregation and condensation protein B from Enterococcus faecalis (strain ATCC 700802 / V583).